A 77-amino-acid polypeptide reads, in one-letter code: MATFDDVKAVVAEQLSIDADAVKMESKIIEDLGADSLDVVELIMALEEKFEVEIPDSDAEKLIKIEDVVNYIDNLKK.

Residues 1–76 (MATFDDVKAV…DVVNYIDNLK (76 aa)) enclose the Carrier domain. Position 36 is an O-(pantetheine 4'-phosphoryl)serine (S36).

This sequence belongs to the acyl carrier protein (ACP) family. 4'-phosphopantetheine is transferred from CoA to a specific serine of apo-ACP by AcpS. This modification is essential for activity because fatty acids are bound in thioester linkage to the sulfhydryl of the prosthetic group.

It localises to the cytoplasm. Its pathway is lipid metabolism; fatty acid biosynthesis. Its function is as follows. Carrier of the growing fatty acid chain in fatty acid biosynthesis. The chain is Acyl carrier protein from Campylobacter jejuni subsp. doylei (strain ATCC BAA-1458 / RM4099 / 269.97).